The primary structure comprises 152 residues: Probable prefoldin subunit 5 (152 aa).

It belongs to the prefoldin subunit alpha family. As to quaternary structure, heterohexamer of two PFD-alpha type and four PFD-beta type subunits.

Binds specifically to cytosolic chaperonin (c-CPN) and transfers target proteins to it. Binds to nascent polypeptide chain and promotes folding in an environment in which there are many competing pathways for nonnative proteins. The sequence is that of Probable prefoldin subunit 5 (pfd-5) from Caenorhabditis elegans.